A 145-amino-acid chain; its full sequence is Secreted LysM effector Vd2LysM (145 aa).

Positions 1–18 are cleaved as a signal peptide; it reads MRPDVFVLFTAFLGPAAA. 2 consecutive LysM domains span residues 31–75 and 96–140; these read GWYI…KIKV and GWYH…DIVV.

The protein belongs to the secreted LysM effector family. Forms homodimers in a chitin-independent manner through interactions at the N-termini of EPL2 monomers. Homodimers are further polymerized in a chitin-dependent manner.

Functionally, secreted effector that enables the plant pathogenic fungus to manipulate host defenses for successful infection. Binds chitin, suppresses chitin-induced immune responses and protects hyphae against degradation by plant hydrolytic enzymes. Chitin-induced polymerization of homodimers forms a contiguous ELP2 highly oligomeric super-complexe that may precipitate at infection sites to eliminate chitin oligomers, and thus suppress the activation of chitin-induced plant immunity. In Verticillium dahliae (strain VdLs.17 / ATCC MYA-4575 / FGSC 10137) (Verticillium wilt), this protein is Secreted LysM effector Vd2LysM.